Reading from the N-terminus, the 173-residue chain is Fimbrial protein PrsE (173 aa).

The first 24 residues, 1 to 24, serve as a signal peptide directing secretion; that stretch reads MKKIRGLCLPVMLGAVLMSQHVHA.

It localises to the secreted. It is found in the fimbrium. Its function is as follows. Fimbriae (also called pili), polar filaments radiating from the surface of the bacterium to a length of 0.5-1.5 micrometers and numbering 100-300 per cell, enable bacteria to colonize the epithelium of specific host organs. The polypeptide is Fimbrial protein PrsE (prsE) (Escherichia coli).